The primary structure comprises 278 residues: Soluble NSF attachment protein homolog FPV011 (278 aa).

Belongs to the SNAP family.

In Fowlpox virus (strain NVSL) (FPV), this protein is Soluble NSF attachment protein homolog FPV011.